Here is a 357-residue protein sequence, read N- to C-terminus: Velvet complex subunit 2 (357 aa).

The 310-residue stretch at R32–R341 folds into the Velvet domain.

This sequence belongs to the velvet family. VelB subfamily. As to quaternary structure, component of the heterotrimeric velvet complex composed of LAE1, VEL1 and VEL2; VEL1A acting as a bridging protein between LAE1 and VEL2. Forms a heterodimeric complex with VOS1; the formation of the VEL2-VOS1 complex is light-dependent.

The protein localises to the nucleus. Its subcellular location is the cytoplasm. Its function is as follows. Component of the velvet transcription factor complex that controls sexual/asexual developmental ratio in response to light, promoting sexual development in the darkness while stimulating asexual sporulation under illumination. The velvet complex acts as a global regulator for secondary metabolite gene expression. Component of the VEL2-VOS1 heterodimeric complex that plays a dual role in activating genes associated with spore maturation and repressing certain development-associated genes. The complex binds DNA through the DNA-binding domain of VOS1 that recognizes an 11-nucleotide consensus sequence 5'-CTGGCCGCGGC-3' consisting of two motifs in the promoters of key developmental regulatory genes. The VEL2-VOS1 complex is required for normal pseudothecium development and regulates asexual spore compartmentalization, pigmentation and germination. This is Velvet complex subunit 2 from Cochliobolus heterostrophus (strain C5 / ATCC 48332 / race O) (Southern corn leaf blight fungus).